The sequence spans 115 residues: NADH-ubiquinone oxidoreductase chain 3 (115 aa).

The next 3 helical transmembrane spans lie at 3–23 (LALA…ITFW), 55–75 (FFLV…LLPL), and 86–106 (LTIA…AYEW).

It belongs to the complex I subunit 3 family. As to quaternary structure, core subunit of respiratory chain NADH dehydrogenase (Complex I) which is composed of 45 different subunits. Interacts with TMEM186. Interacts with TMEM242.

Its subcellular location is the mitochondrion inner membrane. The catalysed reaction is a ubiquinone + NADH + 5 H(+)(in) = a ubiquinol + NAD(+) + 4 H(+)(out). Its function is as follows. Core subunit of the mitochondrial membrane respiratory chain NADH dehydrogenase (Complex I) which catalyzes electron transfer from NADH through the respiratory chain, using ubiquinone as an electron acceptor. Essential for the catalytic activity of complex I. The chain is NADH-ubiquinone oxidoreductase chain 3 from Hylobates lar (Lar gibbon).